The following is a 782-amino-acid chain: Phosphate transporter PHO1 (782 aa).

Residues 1 to 386 are Cytoplasmic-facing; the sequence is MVKFSKELEA…HQTKDSHMVT (386 aa). The SPX domain maps to 2-334; sequence VKFSKELEAQ…GQNASSTYLK (333 aa). The interval 165 to 202 is disordered; it reads KKRNLSGSNSHRSFSSSVRNSDFSAGSPGELSEIQSET. A compositionally biased stretch (low complexity) spans 170–188; it reads SGSNSHRSFSSSVRNSDFS. Residues 315 to 322 are important for inositol polyphosphate binding; sequence KIMKKFDK. Residues 387-407 traverse the membrane as a helical segment; it reads FFVGLFTGCFISLFVIYIILA. Topologically, residues 408-423 are lumenal; the sequence is HLSGIFTSSDQVSYLE. The chain crosses the membrane as a helical span at residues 424–444; that stretch reads TVYPVFSVFALLSLHMFMYGC. Over 445–473 the chain is Cytoplasmic; the sequence is NLYMWKNTRINYTFIFEFAPNTALRYRDA. The chain crosses the membrane as a helical span at residues 474-494; that stretch reads FLMGTTFMTSVVAAMVIHLIL. The Lumenal segment spans residues 495–506; sequence RASGFSASQVDT. A helical membrane pass occupies residues 507-527; sequence IPGILLLIFICVLICPFNTFY. Residues 528–593 are Cytoplasmic-facing; that stretch reads RPTRFCFIRI…THEYNTCKNG (66 aa). The 192-residue stretch at 591 to 782 folds into the EXS domain; the sequence is KNGRYYREFA…LPFLDRDSDG (192 aa). The helical transmembrane segment at 594–614 threads the bilayer; it reads RYYREFAYLISFLPYFWRAMQ. Residues 615–619 are Lumenal-facing; it reads CVRRW. The chain crosses the membrane as a helical span at residues 620–639; the sequence is WDESNPDHLINMGKYVSAMV. Over 640–782 the chain is Cytoplasmic; that stretch reads AAGVRITYAR…LPFLDRDSDG (143 aa).

This sequence belongs to the SYG1 (TC 2.A.94) family. As to quaternary structure, interacts with PHO2. Post-translationally, PHO1 degradation is PHO2 dependent and involves multivesicular body-mediated vacuolar proteolysis. As to expression, predominantly in roots, but also weak expression in the lower part of the hypocotyl. In the stellar cells, including the pericycle and xylem parenchyma cells, but not in the cortical or epidermal cells. Expressed in guard cells.

It is found in the golgi apparatus membrane. The protein localises to the golgi apparatus. The protein resides in the trans-Golgi network membrane. It localises to the endoplasmic reticulum membrane. Inositol polyphosphate sensor that associates with transcription factors to regulate inorganic phosphate (Pi) starvation responses. Probably acts by binding inositol polyphosphate via its SPX domain. Acts as a Pi exporter, mediating efflux of Pi out of cells. Transfers Pi from the epidermal and cortical cells to the root xylem vessels. Involved in the transfer of Pi from roots to shoots. Involved in abscisic acid (ABA) induction of stomatal closure and ABA repression of stomatal opening. The protein is Phosphate transporter PHO1 of Arabidopsis thaliana (Mouse-ear cress).